Consider the following 189-residue polypeptide: uncharacterized protein (189 aa).

Basic and acidic residues predominate over residues 105–115 (EKLEKEEESKT). Residues 105-189 (EKLEKEEESK…TDDEKTEVST (85 aa)) form a disordered region. Residues 116–136 (AKKRAKRLRQKAAAKKRKLTK) show a composition bias toward basic residues. Positions 141–151 (SDESSSDDSDS) are enriched in acidic residues. Basic and acidic residues predominate over residues 161–177 (SEGKQNTEVEDKDKVEK). Positions 178–189 (EETDDEKTEVST) are enriched in acidic residues.

This is an uncharacterized protein from Caenorhabditis elegans.